Consider the following 205-residue polypeptide: MARIYATLIGYVFGNFLTAMIVGKLFLKINPTEYGSHNPGTANMGAVFGKKWGILTCLGDLLKSLIALFIVYFVFPGHINIAYAGLGLILGHCFPIWNHFKGGKGVAVSAQVAVFYDWRAGLATLLIALILTAIMQNLTIPPLVFMLLFSVYEFWQNQEAGIVFMVITLIMVYKFWQDIIDFFTGHGKRVDILYSIKKKLGIKSE.

5 consecutive transmembrane segments (helical) span residues 7 to 27, 52 to 74, 78 to 100, 125 to 145, and 160 to 180; these read TLIG…KLFL, WGIL…VYFV, HINI…WNHF, LLIA…PLVF, and AGIV…QDII.

This sequence belongs to the PlsY family. Probably interacts with PlsX.

The protein resides in the cell membrane. The catalysed reaction is an acyl phosphate + sn-glycerol 3-phosphate = a 1-acyl-sn-glycero-3-phosphate + phosphate. The protein operates within lipid metabolism; phospholipid metabolism. Functionally, catalyzes the transfer of an acyl group from acyl-phosphate (acyl-PO(4)) to glycerol-3-phosphate (G3P) to form lysophosphatidic acid (LPA). This enzyme utilizes acyl-phosphate as fatty acyl donor, but not acyl-CoA or acyl-ACP. The protein is Glycerol-3-phosphate acyltransferase 1 of Lactobacillus acidophilus (strain ATCC 700396 / NCK56 / N2 / NCFM).